Consider the following 177-residue polypeptide: ATP synthase subunit delta (177 aa).

Belongs to the ATPase delta chain family. F-type ATPases have 2 components, F(1) - the catalytic core - and F(0) - the membrane proton channel. F(1) has five subunits: alpha(3), beta(3), gamma(1), delta(1), epsilon(1). F(0) has three main subunits: a(1), b(2) and c(10-14). The alpha and beta chains form an alternating ring which encloses part of the gamma chain. F(1) is attached to F(0) by a central stalk formed by the gamma and epsilon chains, while a peripheral stalk is formed by the delta and b chains.

It localises to the cell inner membrane. Its function is as follows. F(1)F(0) ATP synthase produces ATP from ADP in the presence of a proton or sodium gradient. F-type ATPases consist of two structural domains, F(1) containing the extramembraneous catalytic core and F(0) containing the membrane proton channel, linked together by a central stalk and a peripheral stalk. During catalysis, ATP synthesis in the catalytic domain of F(1) is coupled via a rotary mechanism of the central stalk subunits to proton translocation. This protein is part of the stalk that links CF(0) to CF(1). It either transmits conformational changes from CF(0) to CF(1) or is implicated in proton conduction. The sequence is that of ATP synthase subunit delta from Shigella dysenteriae serotype 1 (strain Sd197).